Consider the following 345-residue polypeptide: Uroporphyrinogen decarboxylase (345 aa).

Substrate-binding positions include 27–31 (RQAGR), Phe46, Asp76, Tyr152, Ser207, and His320.

It belongs to the uroporphyrinogen decarboxylase family. As to quaternary structure, homodimer.

It is found in the cytoplasm. It catalyses the reaction uroporphyrinogen III + 4 H(+) = coproporphyrinogen III + 4 CO2. It functions in the pathway porphyrin-containing compound metabolism; protoporphyrin-IX biosynthesis; coproporphyrinogen-III from 5-aminolevulinate: step 4/4. In terms of biological role, catalyzes the decarboxylation of four acetate groups of uroporphyrinogen-III to yield coproporphyrinogen-III. This chain is Uroporphyrinogen decarboxylase, found in Oceanobacillus iheyensis (strain DSM 14371 / CIP 107618 / JCM 11309 / KCTC 3954 / HTE831).